The chain runs to 285 residues: Diaminopimelate epimerase (285 aa).

Substrate is bound by residues Asn-11 and Asn-62. The active-site Proton donor is the Cys-71. Substrate-binding positions include 72–73, Asn-167, Asn-200, and 218–219; these read GN and ER. Cys-227 functions as the Proton acceptor in the catalytic mechanism. Residue 228 to 229 coordinates substrate; it reads GT.

The protein belongs to the diaminopimelate epimerase family. In terms of assembly, homodimer.

Its subcellular location is the cytoplasm. It catalyses the reaction (2S,6S)-2,6-diaminopimelate = meso-2,6-diaminopimelate. The protein operates within amino-acid biosynthesis; L-lysine biosynthesis via DAP pathway; DL-2,6-diaminopimelate from LL-2,6-diaminopimelate: step 1/1. Catalyzes the stereoinversion of LL-2,6-diaminopimelate (L,L-DAP) to meso-diaminopimelate (meso-DAP), a precursor of L-lysine and an essential component of the bacterial peptidoglycan. This chain is Diaminopimelate epimerase, found in Agathobacter rectalis (strain ATCC 33656 / DSM 3377 / JCM 17463 / KCTC 5835 / VPI 0990) (Eubacterium rectale).